A 28-amino-acid polypeptide reads, in one-letter code: Trypsin inhibitor 4 (28 aa).

Intrachain disulfides connect Cys-2-Cys-19, Cys-9-Cys-21, and Cys-15-Cys-27.

It belongs to the protease inhibitor I7 (squash-type serine protease inhibitor) family.

Its subcellular location is the secreted. Its function is as follows. Inhibits trypsin. This is Trypsin inhibitor 4 from Luffa aegyptiaca (Sponge gourd).